A 124-amino-acid chain; its full sequence is Small ribosomal subunit protein bS6 (124 aa).

The interval 97 to 124 is disordered; it reads TGPSPMMKEVQREEAKKAAAAQPTEAQA. Positions 114–124 are enriched in low complexity; the sequence is AAAAQPTEAQA.

Belongs to the bacterial ribosomal protein bS6 family.

Functionally, binds together with bS18 to 16S ribosomal RNA. The chain is Small ribosomal subunit protein bS6 from Paraburkholderia phymatum (strain DSM 17167 / CIP 108236 / LMG 21445 / STM815) (Burkholderia phymatum).